The chain runs to 208 residues: MKKRLCAVLLASPLLFSAAVFADDAQQLRDKLIGTASLKADFKQTVTDVNKKVIQTGSGIFALAYPNQFYWHLTQPDESQIVADGKDLWIYNPFAEEVVIMDFAEAINASPIALLVHRDDATWSQYSVTKQQDCYEIKPKAIDSGILSVKVCFKNAQLANFNVADDKGNLSQFDLSNQQAITDKDKALFSFVLPDNVDVDDQRRKTAH.

Residues 1-22 form the signal peptide; that stretch reads MKKRLCAVLLASPLLFSAAVFA.

Belongs to the LolA family. As to quaternary structure, monomer.

The protein resides in the periplasm. In terms of biological role, participates in the translocation of lipoproteins from the inner membrane to the outer membrane. Only forms a complex with a lipoprotein if the residue after the N-terminal Cys is not an aspartate (The Asp acts as a targeting signal to indicate that the lipoprotein should stay in the inner membrane). This chain is Outer-membrane lipoprotein carrier protein, found in Shewanella baltica (strain OS223).